The sequence spans 354 residues: NADPH dehydrogenase (354 aa).

Residues serine 23, proline 24, cysteine 26, alanine 58, and glutamine 100 each coordinate FMN. Tyrosine 182 functions as the Proton donor in the catalytic mechanism. The FMN site is built by arginine 230, leucine 301, glycine 323, and arginine 324.

Belongs to the NADH:flavin oxidoreductase/NADH oxidase family. NamA subfamily. As to quaternary structure, homodimer. Behaves as an active monomer in solution while in the crystal packing assembles following the classical dimeric architecture of other thermophilic-like ene-reductases. Requires FMN as cofactor.

It catalyses the reaction A + NADPH + H(+) = AH2 + NADP(+). Functionally, ene-reductase that catalyzes the stereoselective reduction of activated C-C double bonds. Shows very good activity with 4-ketoisophorone, 2-cyclohexen-1-one and 1-octen-3-one, and low activity with maleimide, 2-methyl-pentenal, 2-methyl-cyclohexen-1-one, 2-cyclopenten-1-one and trans-2-hexen-1-al. Shows the highest catalytic efficiency with ketoisophorone. Exhibits a restricted substrate spectrum with generally lower activities compared to other ene-reductases. This is NADPH dehydrogenase from Chloroflexus aggregans (strain MD-66 / DSM 9485).